Here is a 280-residue protein sequence, read N- to C-terminus: Gem-associated protein 2 (280 aa).

Residues M1 to G39 are may play a minor inhibitory role in snRNA binding to 5Sm (SNRPD1, SNRPD2, SNRPE, SNRPF and SNRPG) during snRNP assembly by inserting into the RNA binding pocket of 5Sm. Phosphoserine occurs at positions 81 and 166.

Belongs to the gemin-2 family. In terms of assembly, monomer. Part of the core SMN complex that contains SMN1, GEMIN2/SIP1, DDX20/GEMIN3, GEMIN4, GEMIN5, GEMIN6, GEMIN7, GEMIN8 and STRAP/UNRIP. Part of the SMN-Sm complex that contains SMN1, GEMIN2/SIP1, DDX20/GEMIN3, GEMIN4, GEMIN5, GEMIN6, GEMIN7, GEMIN8, STRAP/UNRIP and the Sm proteins SNRPB, SNRPD1, SNRPD2, SNRPD3, SNRPE, SNRPF and SNRPG. Interacts with GEMIN5; the interaction is direct. Interacts (via C-terminus) with SMN1; the interaction is direct. Interacts with SNRPD1; the interaction is direct. Interacts with SNRPD2; the interaction is direct. Interacts (via N-terminus) with SNRPF; the interaction is direct. Interacts (via N-terminus) with SNRPE; the interaction is direct. Interacts (via N-terminus) with SNRPG; the interaction is direct.

Its subcellular location is the nucleus. It is found in the gem. It localises to the cytoplasm. In terms of biological role, the SMN complex catalyzes the assembly of small nuclear ribonucleoproteins (snRNPs), the building blocks of the spliceosome, and thereby plays an important role in the splicing of cellular pre-mRNAs. Most spliceosomal snRNPs contain a common set of Sm proteins SNRPB, SNRPD1, SNRPD2, SNRPD3, SNRPE, SNRPF and SNRPG that assemble in a heptameric protein ring on the Sm site of the small nuclear RNA to form the core snRNP (Sm core). In the cytosol, the Sm proteins SNRPD1, SNRPD2, SNRPE, SNRPF and SNRPG (5Sm) are trapped in an inactive 6S pICln-Sm complex by the chaperone CLNS1A that controls the assembly of the core snRNP. To assemble core snRNPs, the SMN complex accepts the trapped 5Sm proteins from CLNS1A. Binding of snRNA inside 5Sm ultimately triggers eviction of the SMN complex, thereby allowing binding of SNRPD3 and SNRPB to complete assembly of the core snRNP. Within the SMN complex, GEMIN2 constrains the conformation of 5Sm, thereby promoting 5Sm binding to snRNA containing the snRNP code (a nonameric Sm site and a 3'-adjacent stem-loop), thus preventing progression of assembly until a cognate substrate is bound. The polypeptide is Gem-associated protein 2 (Homo sapiens (Human)).